Here is a 101-residue protein sequence, read N- to C-terminus: Trp operon repressor homolog (101 aa).

Residues 59–82 mediate DNA binding; sequence QREIQQNLNTSAATITRGSNMLKL.

It belongs to the TrpR family. Homodimer.

The protein localises to the cytoplasm. Its function is as follows. This protein is an aporepressor. When complexed with L-tryptophan it binds the operator region of the trp operon and prevents the initiation of transcription. The sequence is that of Trp operon repressor homolog from Mannheimia succiniciproducens (strain KCTC 0769BP / MBEL55E).